We begin with the raw amino-acid sequence, 598 residues long: DNA mismatch repair protein MutL (598 aa).

The protein belongs to the DNA mismatch repair MutL/HexB family.

In terms of biological role, this protein is involved in the repair of mismatches in DNA. It is required for dam-dependent methyl-directed DNA mismatch repair. May act as a 'molecular matchmaker', a protein that promotes the formation of a stable complex between two or more DNA-binding proteins in an ATP-dependent manner without itself being part of a final effector complex. The polypeptide is DNA mismatch repair protein MutL (Thiobacillus denitrificans (strain ATCC 25259 / T1)).